Reading from the N-terminus, the 829-residue chain is Probable receptor-like protein kinase At5g59700 (829 aa).

The signal sequence occupies residues 1–24 (MGGEKFGFLIWILSIPCLIFLCYG). Over 25-406 (YVPVDNYLIN…SSTTKKNVGM (382 aa)) the chain is Extracellular. 4 N-linked (GlcNAc...) asparagine glycosylation sites follow: asparagine 40, asparagine 216, asparagine 279, and asparagine 380. A helical membrane pass occupies residues 407 to 427 (IIGLTIGSLLALVVLGGFFVL). The Cytoplasmic segment spans residues 428–829 (YKKRGRDQDG…FSQLIKSEGR (402 aa)). One can recognise a Protein kinase domain in the interval 482-755 (FDENRAIGVG…GDVLWNLEYA (274 aa)). ATP is bound by residues 488-496 (IGVGGFGKV) and lysine 510. Residue aspartate 606 is the Proton acceptor of the active site.

It belongs to the protein kinase superfamily. Ser/Thr protein kinase family.

Its subcellular location is the cell membrane. The chain is Probable receptor-like protein kinase At5g59700 from Arabidopsis thaliana (Mouse-ear cress).